We begin with the raw amino-acid sequence, 220 residues long: Large ribosomal subunit protein uL3 (220 aa).

The interval 127–155 is disordered; that stretch reads FQGAIKRHGQSRGPMSHSSHFHRAPDSVG.

This sequence belongs to the universal ribosomal protein uL3 family. As to quaternary structure, part of the 50S ribosomal subunit. Forms a cluster with proteins L14 and L19.

Functionally, one of the primary rRNA binding proteins, it binds directly near the 3'-end of the 23S rRNA, where it nucleates assembly of the 50S subunit. The polypeptide is Large ribosomal subunit protein uL3 (Staphylococcus aureus (strain JH9)).